The sequence spans 110 residues: CHH-like protein (110 aa).

A signal peptide spans 1–23; the sequence is MHLSSVQFAWAALVALAVSAAGA. A propeptide spanning residues 24 to 35 is cleaved from the precursor; sequence LPSSAPHHVERR. 3 disulfide bridges follow: C42/C78, C58/C74, and C61/C87. V107 bears the Valine amide mark.

Belongs to the arthropod CHH/MIH/GIH/VIH hormone family.

The protein resides in the secreted. The polypeptide is CHH-like protein (CHHL) (Bombyx mori (Silk moth)).